The following is a 507-amino-acid chain: MAQYDVAIIGAGSAGALIAARLSEDPARNVLLIEAGGRPSDPDILKPSMWPAIQHRSYDWDYKTTPQEGAAGRSFAWARGKGLGGSSLLHAMGYMRGHPADFAAWAEATGDERWSWEGLLPSFMANEDHVSGGDGIHGKDGPMPVWIPDDEVSPLTQAFMTAGNALGLPRIPDHNTGQMIGVTPNSLMIRDGRRVTVAEAWLTPEVCARPNLTIMTGTLTRRLKLEKSHVSAIELAGPEGLATVTASEIILSAGSLESPALLMRSGIGRENVLREAGVTCRVKAPELGLNLMDHLLGAGNLYATKKHLPPSRLQHSESMAYMRAGDFSAGGQPEIVVGCGVAPIVSESFTAPAPGNAYSFLFGVTHPTSRGEIRITGDAPDSPLIIDPRYLQTQNDRNLFRAALGAAREIGHRPELAEWRDHEILPKSLAASQDIDTFIAKAVITHHHPSGTCRMGKDEMSVVDADLRLRGLDNLYVVDGSVLPSLTAGPIHAAVQAIAENFTTGFK.

Histidine 448 acts as the Proton acceptor in catalysis.

The protein belongs to the GMC oxidoreductase family. Monomer. FAD serves as cofactor.

The catalysed reaction is pyridoxine + O2 = pyridoxal + H2O2. It participates in cofactor degradation; B6 vitamer degradation; pyridoxal from pyridoxine (oxidase route): step 1/1. In Microbacterium luteolum (Aureobacterium luteolum), this protein is Pyridoxine 4-oxidase (pno).